Consider the following 420-residue polypeptide: Exodeoxyribonuclease 7 large subunit (420 aa).

Belongs to the XseA family. As to quaternary structure, heterooligomer composed of large and small subunits.

The protein localises to the cytoplasm. It catalyses the reaction Exonucleolytic cleavage in either 5'- to 3'- or 3'- to 5'-direction to yield nucleoside 5'-phosphates.. In terms of biological role, bidirectionally degrades single-stranded DNA into large acid-insoluble oligonucleotides, which are then degraded further into small acid-soluble oligonucleotides. The polypeptide is Exodeoxyribonuclease 7 large subunit (Helicobacter pylori (strain G27)).